The following is a 429-amino-acid chain: Mannose-6-phosphate isomerase (429 aa).

Zn(2+) contacts are provided by Q110, H112, E137, and H282. Residue R301 is part of the active site.

Belongs to the mannose-6-phosphate isomerase type 1 family. Requires Zn(2+) as cofactor.

Its subcellular location is the cytoplasm. It catalyses the reaction D-mannose 6-phosphate = D-fructose 6-phosphate. The protein operates within nucleotide-sugar biosynthesis; GDP-alpha-D-mannose biosynthesis; alpha-D-mannose 1-phosphate from D-fructose 6-phosphate: step 1/2. Involved in the synthesis of the GDP-mannose and dolichol-phosphate-mannose required for a number of critical mannosyl transfer reactions. This Candida glabrata (strain ATCC 2001 / BCRC 20586 / JCM 3761 / NBRC 0622 / NRRL Y-65 / CBS 138) (Yeast) protein is Mannose-6-phosphate isomerase (PMI1).